Here is a 384-residue protein sequence, read N- to C-terminus: 8-amino-7-oxononanoate synthase (384 aa).

R21 provides a ligand contact to substrate. 108-109 (GF) contacts pyridoxal 5'-phosphate. Residue H133 coordinates substrate. Pyridoxal 5'-phosphate-binding residues include S179, H207, and T233. Residue K236 is modified to N6-(pyridoxal phosphate)lysine. T352 provides a ligand contact to substrate.

The protein belongs to the class-II pyridoxal-phosphate-dependent aminotransferase family. BioF subfamily. In terms of assembly, homodimer. It depends on pyridoxal 5'-phosphate as a cofactor.

It carries out the reaction 6-carboxyhexanoyl-[ACP] + L-alanine + H(+) = (8S)-8-amino-7-oxononanoate + holo-[ACP] + CO2. It functions in the pathway cofactor biosynthesis; biotin biosynthesis. Its function is as follows. Catalyzes the decarboxylative condensation of pimeloyl-[acyl-carrier protein] and L-alanine to produce 8-amino-7-oxononanoate (AON), [acyl-carrier protein], and carbon dioxide. This chain is 8-amino-7-oxononanoate synthase, found in Escherichia coli O157:H7.